The sequence spans 192 residues: Orotate phosphoribosyltransferase 2 (192 aa).

A 5-phospho-alpha-D-ribose 1-diphosphate-binding site is contributed by 116–124 (EDIVTTGLS). Residues threonine 120 and arginine 148 each coordinate orotate.

The protein belongs to the purine/pyrimidine phosphoribosyltransferase family. PyrE subfamily. As to quaternary structure, homodimer. Mg(2+) is required as a cofactor.

It catalyses the reaction orotidine 5'-phosphate + diphosphate = orotate + 5-phospho-alpha-D-ribose 1-diphosphate. Its pathway is pyrimidine metabolism; UMP biosynthesis via de novo pathway; UMP from orotate: step 1/2. Catalyzes the transfer of a ribosyl phosphate group from 5-phosphoribose 1-diphosphate to orotate, leading to the formation of orotidine monophosphate (OMP). The chain is Orotate phosphoribosyltransferase 2 from Mesorhizobium japonicum (strain LMG 29417 / CECT 9101 / MAFF 303099) (Mesorhizobium loti (strain MAFF 303099)).